Consider the following 692-residue polypeptide: Polyphosphate kinase (692 aa).

Residue N57 coordinates ATP. 2 residues coordinate Mg(2+): R383 and R413. The active-site Phosphohistidine intermediate is H443. Residues Y476, R572, and H600 each contribute to the ATP site.

The protein belongs to the polyphosphate kinase 1 (PPK1) family. Mg(2+) is required as a cofactor. An intermediate of this reaction is the autophosphorylated ppk in which a phosphate is covalently linked to a histidine residue through a N-P bond.

The enzyme catalyses [phosphate](n) + ATP = [phosphate](n+1) + ADP. Functionally, catalyzes the reversible transfer of the terminal phosphate of ATP to form a long-chain polyphosphate (polyP). This is Polyphosphate kinase from Acinetobacter baumannii (strain AYE).